A 555-amino-acid polypeptide reads, in one-letter code: Spermine oxidase (555 aa).

Residues Ala-35, Glu-55, Arg-63, 79-80 (TW), and Val-261 each bind FAD. The segment at 271–307 (AHPRGPEIEPRGEGDHNHDTGEGGQSGENPQQGRWDE) is disordered. The span at 274–291 (RGPEIEPRGEGDHNHDTG) shows a compositional bias: basic and acidic residues. FAD-binding positions include Glu-519 and 528–529 (TT).

This sequence belongs to the flavin monoamine oxidase family. FAD serves as cofactor. Widely expressed. Isoform 1 and isoform 2 are expressed at higher level in brain and skeletal muscle. Isoform 7 is found in brain and spleen, isoform 10 is widely expressed but found at lower level in heart, kidney, liver and lung.

The protein localises to the cytoplasm. Its subcellular location is the nucleus. The enzyme catalyses spermine + O2 + H2O = 3-aminopropanal + spermidine + H2O2. The protein operates within amine and polyamine degradation; spermine degradation. In terms of biological role, flavoenzyme which catalyzes the oxidation of spermine to spermidine. Can also use N(1)-acetylspermine and spermidine as substrates, with different affinity depending on the isoform (isozyme) and on the experimental conditions. Plays an important role in the regulation of polyamine intracellular concentration and has the potential to act as a determinant of cellular sensitivity to the antitumor polyamine analogs. May contribute to beta-alanine production via aldehyde dehydrogenase conversion of 3-amino-propanal. This Mus musculus (Mouse) protein is Spermine oxidase (Smox).